Here is a 146-residue protein sequence, read N- to C-terminus: Small ribosomal subunit protein uS9z (146 aa).

The protein belongs to the universal ribosomal protein uS9 family.

The polypeptide is Small ribosomal subunit protein uS9z (RPS16A) (Arabidopsis thaliana (Mouse-ear cress)).